Consider the following 398-residue polypeptide: Probable peptidoglycan glycosyltransferase FtsW (398 aa).

At 1–25 the chain is on the cytoplasmic side; sequence MCYGGTAMMAFADIKEALTPKPSAQ. Residues 26–46 form a helical membrane-spanning segment; that stretch reads LYDVPLLYCMLMLMGVGFVMV. At 47 to 69 the chain is on the periplasmic side; sequence TSASMPTADRLFGNIYHFTIRHG. Residues 70–90 traverse the membrane as a helical segment; it reads IFLALSFCLFWITTSVPMSWW. Lysine 91 is a topological domain (cytoplasmic). A helical membrane pass occupies residues 92–112; it reads KANPYLLLVGLGLLLIVLIVG. Residues 113-120 lie on the Periplasmic side of the membrane; the sequence is REVNGSTR. Residues 121–141 traverse the membrane as a helical segment; sequence WIPIGPFNIQASELAKLFFFS. At 142–156 the chain is on the cytoplasmic side; sequence YISGYLVRKRSEVQE. Residues 157-177 traverse the membrane as a helical segment; that stretch reads NIKGFIKPILVFAAYAGLILM. Residues 178-179 are Periplasmic-facing; the sequence is QP. The chain crosses the membrane as a helical span at residues 180–200; sequence DLGTVVVMFVTTVGLLFLAGA. Position 201 (lysine 201) is a topological domain, cytoplasmic. A helical transmembrane segment spans residues 202 to 222; that stretch reads LWQFFVLILTGVALVIGLIVL. Topologically, residues 223 to 289 are periplasmic; the sequence is EPYRMARVIG…DFIFAVIAEE (67 aa). The chain crosses the membrane as a helical span at residues 290–312; the sequence is LGFVGVSSILIVLGTLVFRALLI. The Cytoplasmic portion of the chain corresponds to 313–324; that stretch reads GQNALKNGKEYE. Residues 325–345 form a helical membrane-spanning segment; it reads GYLALAIGIWFAFQTMVNVGA. Residues 346 to 356 are Periplasmic-facing; sequence SAGILPTKGLT. A helical transmembrane segment spans residues 357–377; the sequence is LPFISYGGSSLLMMTIAAGIL. Topologically, residues 378–398 are cytoplasmic; it reads LRVDFETKMATKQATSGGAKR.

This sequence belongs to the SEDS family. FtsW subfamily.

The protein resides in the cell inner membrane. The catalysed reaction is [GlcNAc-(1-&gt;4)-Mur2Ac(oyl-L-Ala-gamma-D-Glu-L-Lys-D-Ala-D-Ala)](n)-di-trans,octa-cis-undecaprenyl diphosphate + beta-D-GlcNAc-(1-&gt;4)-Mur2Ac(oyl-L-Ala-gamma-D-Glu-L-Lys-D-Ala-D-Ala)-di-trans,octa-cis-undecaprenyl diphosphate = [GlcNAc-(1-&gt;4)-Mur2Ac(oyl-L-Ala-gamma-D-Glu-L-Lys-D-Ala-D-Ala)](n+1)-di-trans,octa-cis-undecaprenyl diphosphate + di-trans,octa-cis-undecaprenyl diphosphate + H(+). It functions in the pathway cell wall biogenesis; peptidoglycan biosynthesis. In terms of biological role, peptidoglycan polymerase that is essential for cell division. The polypeptide is Probable peptidoglycan glycosyltransferase FtsW (Pseudoalteromonas translucida (strain TAC 125)).